Here is a 213-residue protein sequence, read N- to C-terminus: Pyridoxine/pyridoxamine 5'-phosphate oxidase (213 aa).

Residues 8-11 (RREY) and lysine 67 each bind substrate. Residues 62–67 (RIVLLK), 77–78 (FT), arginine 83, lysine 84, and glutamine 106 contribute to the FMN site. Tyrosine 124, arginine 128, and serine 132 together coordinate substrate. Residues 141–142 (QS) and tryptophan 186 each bind FMN. 192–194 (RLH) serves as a coordination point for substrate. Arginine 196 lines the FMN pocket.

It belongs to the pyridoxamine 5'-phosphate oxidase family. In terms of assembly, homodimer. FMN is required as a cofactor.

It carries out the reaction pyridoxamine 5'-phosphate + O2 + H2O = pyridoxal 5'-phosphate + H2O2 + NH4(+). The enzyme catalyses pyridoxine 5'-phosphate + O2 = pyridoxal 5'-phosphate + H2O2. The protein operates within cofactor metabolism; pyridoxal 5'-phosphate salvage; pyridoxal 5'-phosphate from pyridoxamine 5'-phosphate: step 1/1. It functions in the pathway cofactor metabolism; pyridoxal 5'-phosphate salvage; pyridoxal 5'-phosphate from pyridoxine 5'-phosphate: step 1/1. Its function is as follows. Catalyzes the oxidation of either pyridoxine 5'-phosphate (PNP) or pyridoxamine 5'-phosphate (PMP) into pyridoxal 5'-phosphate (PLP). The chain is Pyridoxine/pyridoxamine 5'-phosphate oxidase from Shewanella woodyi (strain ATCC 51908 / MS32).